The chain runs to 931 residues: Adhesion G protein-coupled receptor E1 (931 aa).

The signal sequence occupies residues 1–27 (MWGFWLLLFWGFSGMYRWGMTTLPTLG). Residues 28–644 (QTLGGVNECQ…IMASGELTME (617 aa)) are Extracellular-facing. EGF-like domains are found at residues 32–80 (GVNE…VECQ) and 81–132 (DVNE…FLCA). 21 disulfide bridges follow: cysteine 36/cysteine 48, cysteine 42/cysteine 57, cysteine 59/cysteine 79, cysteine 85/cysteine 98, cysteine 92/cysteine 107, cysteine 109/cysteine 131, cysteine 137/cysteine 149, cysteine 143/cysteine 158, cysteine 160/cysteine 171, cysteine 177/cysteine 189, cysteine 183/cysteine 198, cysteine 200/cysteine 220, cysteine 226/cysteine 239, cysteine 233/cysteine 248, cysteine 250/cysteine 270, cysteine 276/cysteine 286, cysteine 280/cysteine 295, cysteine 297/cysteine 317, cysteine 323/cysteine 336, cysteine 330/cysteine 345, and cysteine 347/cysteine 366. The region spanning 133 to 172 (DVDECLTIGICPKYSNCSNSVGSYSCTCQPGFVLNGSICE) is the EGF-like 3; calcium-binding domain. N-linked (GlcNAc...) asparagine glycans are attached at residues asparagine 148 and asparagine 167. The region spanning 173-221 (DEDECVTRDVCPEHATCHNTLGSYYCTCNSGLESSGGGPMFQGLDESCE) is the EGF-like 4; calcium-binding domain. An EGF-like 5; calcium-binding domain is found at 222-271 (DVDECSRNSTLCGPTFICINTLGSYSCSCPAGFSLPTFQILGHPADGNCT). Asparagine 229 carries an N-linked (GlcNAc...) asparagine glycan. Residues asparagine 269 and asparagine 283 are each glycosylated (N-linked (GlcNAc...) asparagine). In terms of domain architecture, EGF-like 6; calcium-binding spans 272 to 318 (DIDECDDTCPLNSSCTNTIGSYFCTCHPGFASSNGQLNFKDLEVTCE). In terms of domain architecture, EGF-like 7; calcium-binding spans 319–367 (DIDECTQDPLQCGLNSVCTNVPGSYICGCLPDFQMDPEGSQGYGNFNCK). 4 N-linked (GlcNAc...) asparagine glycosylation sites follow: asparagine 405, asparagine 417, asparagine 474, and asparagine 498. Residues 482–642 (EYLDIESKVI…AIIMASGELT (161 aa)) form the GAIN-B domain. Positions 506 to 508 (RGD) match the Cell attachment site motif. Intrachain disulfides connect cysteine 595–cysteine 624 and cysteine 612–cysteine 626. Positions 595 to 642 (CVSWNTDVEDGRWTPSGCEIVEASETHTVCSCNRMANLAIIMASGELT) are GPS. The chain crosses the membrane as a helical span at residues 645–672 (FSLYIISHVGTVISLVCLALAIATFLLC). Residues 673–679 (RAVQNHN) lie on the Cytoplasmic side of the membrane. A helical transmembrane segment spans residues 680–701 (TYMHLHLCVCLFLAKILFLTGI). The Extracellular portion of the chain corresponds to 702-711 (DKTDNQTACA). The N-linked (GlcNAc...) asparagine glycan is linked to asparagine 706. A helical transmembrane segment spans residues 712 to 735 (IIAGFLHYLFLACFFWMLVEAVML). The Cytoplasmic segment spans residues 736–754 (FLMVRNLKVVNYFSSRNIK). Residues 755 to 776 (MLHLCAFGYGLPVLVVIISASV) form a helical membrane-spanning segment. The Extracellular portion of the chain corresponds to 777 to 792 (QPRGYGMHNRCWLNTE). The chain crosses the membrane as a helical span at residues 793-821 (TGFIWSFLGPVCMIITINSVLLAWTLWVL). Residues 822-839 (RQKLCSVSSEVSKLKDTR) are Cytoplasmic-facing. A helical transmembrane segment spans residues 840-859 (LLTFKAIAQIFILGCSWVLG). The Extracellular portion of the chain corresponds to 860–874 (IFQIGPLASIMAYLF). The helical transmembrane segment at 875–897 (TIINSLQGAFIFLIHCLLNRQVR) threads the bilayer. The Cytoplasmic portion of the chain corresponds to 898–931 (DEYKKLLTRKTDLSSHSQTSGILLSSMPSTSKMG).

It belongs to the G-protein coupled receptor 2 family. Adhesion G-protein coupled receptor (ADGR) subfamily. As to expression, in macrophages; but absent from those which are localized within T-cell areas of lymph nodes and spleen. Low level of expression on blood monocytes.

The protein localises to the cell membrane. In terms of biological role, orphan receptor involved in cell adhesion and probably in cell-cell interactions specifically involving cells of the immune system. May play a role in regulatory T-cells (Treg) development. The polypeptide is Adhesion G protein-coupled receptor E1 (Adgre1) (Mus musculus (Mouse)).